The primary structure comprises 396 residues: Period circadian protein (396 aa).

Disordered stretches follow at residues 27 to 120, 167 to 188, 253 to 275, and 333 to 362; these read VTAP…APPV, SGPGPGHGHGIKRGGSHSWEGE, GGNGNVGSGNGNNNQPSTNQYTQ, and SPSSTNTNPNRPHKHAHVHNSSEKPSTSQA. A compositionally biased stretch (gly residues) spans 93–114; the sequence is GTSGTGNSGDGGGGGGANGTGS. Residues 253–262 are compositionally biased toward gly residues; that stretch reads GGNGNVGSGN. Positions 333 to 342 are enriched in low complexity; the sequence is SPSSTNTNPN.

As to quaternary structure, forms a heterodimer with timeless (TIM); the complex then translocates into the nucleus. Post-translationally, phosphorylated with a circadian rhythmicity, probably by the double-time protein (dbt). Phosphorylation could be implicated in the stability of per monomer and in the formation of heterodimer per-tim.

The protein resides in the nucleus. It localises to the cytoplasm. The protein localises to the perinuclear region. In terms of biological role, essential for biological clock functions. Determines the period length of circadian and ultradian rhythms; an increase in PER dosage leads to shortened circadian rhythms and a decrease leads to lengthened circadian rhythms. Essential for the circadian rhythmicity of locomotor activity, eclosion behavior, and for the rhythmic component of the male courtship song that originates in the thoracic nervous system. The biological cycle depends on the rhythmic formation and nuclear localization of the TIM-PER complex. Light induces the degradation of TIM, which promotes elimination of PER. Nuclear activity of the heterodimer coordinatively regulates PER and TIM transcription through a negative feedback loop. Behaves as a negative element in circadian transcriptional loop. Does not appear to bind DNA, suggesting indirect transcriptional inhibition. The polypeptide is Period circadian protein (per) (Drosophila paulistorum (Fruit fly)).